The chain runs to 417 residues: Sulfite reductase, dissimilatory-type subunit alpha (417 aa).

[4Fe-4S] cluster is bound by residues Cys-170, Cys-176, Cys-214, Cys-218, Cys-264, Cys-284, Cys-287, and Cys-290. Cys-218 contacts siroheme.

Requires [4Fe-4S] cluster as cofactor. Siroheme is required as a cofactor.

It carries out the reaction [DsrC protein]-trisulfide + NAD(+) + 3 H2O = [DsrC protein]-dithiol + sulfite + NADH + 3 H(+). Catalyzes the reduction of sulfite to sulfide. This is the terminal oxidation reaction in sulfate respiration. This Allochromatium vinosum (strain ATCC 17899 / DSM 180 / NBRC 103801 / NCIMB 10441 / D) (Chromatium vinosum) protein is Sulfite reductase, dissimilatory-type subunit alpha (dsrA).